Here is a 218-residue protein sequence, read N- to C-terminus: Large ribosomal subunit protein uL1 (218 aa).

This sequence belongs to the universal ribosomal protein uL1 family. Part of the 50S ribosomal subunit.

Functionally, probably involved in E site tRNA release. Binds directly to 23S rRNA. Protein L1 is also a translational repressor protein, it controls the translation of its operon by binding to its mRNA. This chain is Large ribosomal subunit protein uL1, found in Saccharolobus solfataricus (strain ATCC 35092 / DSM 1617 / JCM 11322 / P2) (Sulfolobus solfataricus).